A 561-amino-acid polypeptide reads, in one-letter code: uncharacterized protein (561 aa).

6 consecutive transmembrane segments (helical) span residues 27–49 (ILEF…GLLI), 54–71 (FFGI…ALAL), 83–105 (LVYQ…SEFF), 115–137 (LTLF…IKLF), 142–162 (IIGA…AAMV), and 177–199 (VVGY…AIGA). The RCK C-terminal domain occupies 292 to 373 (QQDVPIEDTD…MSEVRRFLGD (82 aa)). Transmembrane regions (helical) follow at residues 383–405 (LMPF…PLPG), 409–428 (LSLG…GALN), 441–463 (ASRT…SAGV), and 478–500 (IAGG…MPLF).

The protein belongs to the AAE transporter (TC 2.A.81) family.

It localises to the cell membrane. This is an uncharacterized protein from Corynebacterium diphtheriae (strain ATCC 700971 / NCTC 13129 / Biotype gravis).